The primary structure comprises 150 residues: MTRKQKRLAIIGGGVAFLTAAVLLVMFAFSQAVAYFYVPGDLAKADVAPGTRIRLGGLVEAGSVKRGEGRTITFTVTDTLATVPVTYTGILPDLFREGQGVVAEGAFVGGSPVFVADTVLAKHDETYMPKDVADRLKAQGVTLGGEENIR.

Residues 1-7 lie on the Cytoplasmic side of the membrane; it reads MTRKQKR. A helical; Signal-anchor for type II membrane protein membrane pass occupies residues 8 to 28; that stretch reads LAIIGGGVAFLTAAVLLVMFA. Residues 29 to 150 lie on the Periplasmic side of the membrane; it reads FSQAVAYFYV…VTLGGEENIR (122 aa). Heme contacts are provided by His123 and Tyr127.

This sequence belongs to the CcmE/CycJ family.

It is found in the cell inner membrane. Functionally, heme chaperone required for the biogenesis of c-type cytochromes. Transiently binds heme delivered by CcmC and transfers the heme to apo-cytochromes in a process facilitated by CcmF and CcmH. In Rhizobium meliloti (strain 1021) (Ensifer meliloti), this protein is Cytochrome c-type biogenesis protein CcmE.